Reading from the N-terminus, the 210-residue chain is Glutathione S-transferase P (210 aa).

The GST N-terminal domain occupies proline 2–glycine 81. Phosphotyrosine; by EGFR is present on tyrosine 4. Residues tyrosine 8, arginine 14, tryptophan 39, lysine 45, and glutamine 52 to leucine 53 contribute to the glutathione site. Position 62 is a phosphothreonine (threonine 62). Glutamine 65–serine 66 lines the glutathione pocket. In terms of domain architecture, GST C-terminal spans aspartate 83–isoleucine 204. 2 positions are modified to N6-succinyllysine: lysine 103 and lysine 116. Lysine 128 carries the post-translational modification N6-acetyllysine.

The protein belongs to the GST superfamily. Pi family. In terms of assembly, homodimer. Interacts with CDK5.

The protein localises to the cytoplasm. It localises to the mitochondrion. The protein resides in the nucleus. It carries out the reaction RX + glutathione = an S-substituted glutathione + a halide anion + H(+). The catalysed reaction is prostaglandin J2 + glutathione = prostaglandin J2-S-(R)-glutathione. It catalyses the reaction prostaglandin J2 + glutathione = prostaglandin J2-S-(S)-glutathione. The enzyme catalyses prostaglandin A2 + glutathione = prostaglandin A2-S-(S)-glutathione. It carries out the reaction 11(S)-hydroxy-14(S),15(S)-epoxy-(5Z,8Z,12E)-eicosatrienoate + glutathione = (11S,15S)-dihydroxy-14(R)-S-glutathionyl-(5Z,8Z,12E)-eicosatrienoate. Its function is as follows. Conjugation of reduced glutathione to a wide number of exogenous and endogenous hydrophobic electrophiles. Involved in the formation of glutathione conjugates of both prostaglandin A2 (PGA2) and prostaglandin J2 (PGJ2). Participates in the formation of novel hepoxilin regioisomers. Negatively regulates CDK5 activity via p25/p35 translocation to prevent neurodegeneration. This chain is Glutathione S-transferase P (GSTP1), found in Pongo abelii (Sumatran orangutan).